A 154-amino-acid chain; its full sequence is SsrA-binding protein (154 aa).

It belongs to the SmpB family.

Its subcellular location is the cytoplasm. Required for rescue of stalled ribosomes mediated by trans-translation. Binds to transfer-messenger RNA (tmRNA), required for stable association of tmRNA with ribosomes. tmRNA and SmpB together mimic tRNA shape, replacing the anticodon stem-loop with SmpB. tmRNA is encoded by the ssrA gene; the 2 termini fold to resemble tRNA(Ala) and it encodes a 'tag peptide', a short internal open reading frame. During trans-translation Ala-aminoacylated tmRNA acts like a tRNA, entering the A-site of stalled ribosomes, displacing the stalled mRNA. The ribosome then switches to translate the ORF on the tmRNA; the nascent peptide is terminated with the 'tag peptide' encoded by the tmRNA and targeted for degradation. The ribosome is freed to recommence translation, which seems to be the essential function of trans-translation. This is SsrA-binding protein from Staphylococcus aureus (strain USA300).